Here is a 798-residue protein sequence, read N- to C-terminus: MSLVYLLSTLILIMVILLFTLTNIKFQKYAGHIALLAPIVASVYFLYQLPSVMQGNFVSVKIPWLTLLDINIDFRLDGLSLFFSLLISLIGLAVVYYATQYLSKEHDNLPRFYVYLLLFMFSMLGIVTANNTILMYVFWELTSVSSFLLIVYWYSKGDSQFGAIQSFMITVFGGLALLAGFIMIYIVTGTNSITSIIEQSDKIAQSHLFIPIIILLLLGAFTKSAQFPFHIWLPKAMAAPTPVSAYLHSATMVKAGIFLLFRFTSVLGLSDFYIYSVTFVGLITMIFGAVNATRQFDMKAILAYSTISQLGMIVSMVGLGGGFAQHPTGELSKIYGMILFAALFHLMNHALYKGALFMGVGIIDHETGTRDIRRLSGLKKVFPITHIVMLLSALSMAGIPFLNGFLSKEMFFDGLVSTVELPQFNLTLTVIITVIGVIASIFTLVYGVYMIKEVFWGDYQQADLPKKSPHEPFLFTLPSAIMMILLPVIFFIPNLFGHNIILPALRSITIGEKVDQVAPHVSQWHGFNLPLILSLIVIVVGFIMALRINWKKYANQVKVKTITDLYLGSYKQFEHYSGYGIRSLMNNRLNHYITITLLIFSMVVIYGMIQAGFPEVHQIHVSDFGPIEVITLIVVFVLGIALTFIRQRLTMVVLNGIIGYCVTIFFILMKAPDLALTQLVVETITTILFIVSFSRLPNVPRAKVNKKREAVKIIVSLLMAVIVVTLVFIAQQGDSMPTISTFYHDAYKLTGGKNIVNAILGDFRAIDTLFEGMVLIIAGLGIYTLLNFKERRGQDERE.

Helical transmembrane passes span 1–21 (MSLV…LFTL), 33–53 (IALL…PSVM), 78–98 (GLSL…VYYA), 109–129 (LPRF…IVTA), 133–153 (ILMY…IVYW), 167–187 (FMIT…IYIV), 209–229 (FIPI…QFPF), 241–261 (TPVS…FLLF), 272–292 (FYIY…AVNA), 300–320 (AILA…VGLG), 337–357 (MILF…GALF), 381–401 (VFPI…GIPF), 431–451 (IITV…VYMI), 472–492 (PFLF…IFFI), 526–546 (GFNL…IMAL), 593–613 (ITIT…QAGF), 625–645 (GPIE…LTFI), 649–669 (LTMV…FILM), 674–694 (LALT…VSFS), 710–730 (AVKI…VFIA), and 766–786 (IDTL…YTLL).

Belongs to the CPA3 antiporters (TC 2.A.63) subunit A family. In terms of assembly, may form a heterooligomeric complex that consists of seven subunits: mnhA2, mnhB2, mnhC2, mnhD2, mnhE2, mnhF2 and mnhG2.

It is found in the cell membrane. This is Putative antiporter subunit mnhA2 (mnhA2) from Staphylococcus saprophyticus subsp. saprophyticus (strain ATCC 15305 / DSM 20229 / NCIMB 8711 / NCTC 7292 / S-41).